The primary structure comprises 572 residues: AAA ATPase forming ring-shaped complexes (572 aa).

The segment covering 1–18 (MTTASQQTSSHSTASSTS) has biased composition (low complexity). The segment at 1–30 (MTTASQQTSSHSTASSTSRKGNNNDATPSL) is disordered. Positions 42–70 (TRNAKLVEMLKASRDKLDALNEQIRALSD) form a coiled coil. ATP is bound at residue 258–263 (GCGKTL). Positions 543–572 (VAHHNRKTTTETEATEPEGTDSGKGHTDAS) are disordered. Residues 563-572 (DSGKGHTDAS) show a composition bias toward basic and acidic residues.

Belongs to the AAA ATPase family. Homohexamer. Assembles into a hexameric ring structure.

This is AAA ATPase forming ring-shaped complexes from Corynebacterium kroppenstedtii (strain DSM 44385 / JCM 11950 / CIP 105744 / CCUG 35717).